The following is a 251-amino-acid chain: 4-hydroxy-tetrahydrodipicolinate reductase (251 aa).

NAD(+) contacts are provided by residues 8-13, 76-78, and 106-109; these read GAKGRM, GTT, and APNF. His-136 acts as the Proton donor/acceptor in catalysis. His-137 is a (S)-2,3,4,5-tetrahydrodipicolinate binding site. The active-site Proton donor is the Lys-140. 146 to 147 is a (S)-2,3,4,5-tetrahydrodipicolinate binding site; sequence GT.

This sequence belongs to the DapB family.

The protein localises to the cytoplasm. The catalysed reaction is (S)-2,3,4,5-tetrahydrodipicolinate + NAD(+) + H2O = (2S,4S)-4-hydroxy-2,3,4,5-tetrahydrodipicolinate + NADH + H(+). It catalyses the reaction (S)-2,3,4,5-tetrahydrodipicolinate + NADP(+) + H2O = (2S,4S)-4-hydroxy-2,3,4,5-tetrahydrodipicolinate + NADPH + H(+). It participates in amino-acid biosynthesis; L-lysine biosynthesis via DAP pathway; (S)-tetrahydrodipicolinate from L-aspartate: step 4/4. Functionally, catalyzes the conversion of 4-hydroxy-tetrahydrodipicolinate (HTPA) to tetrahydrodipicolinate. The sequence is that of 4-hydroxy-tetrahydrodipicolinate reductase from Bifidobacterium longum (strain NCC 2705).